Here is a 439-residue protein sequence, read N- to C-terminus: Ornithine aminotransferase, mitochondrial (439 aa).

A mitochondrion-targeting transit peptide spans 1–25 (MLSKLASLQTIAALRRGVHTSVASA). Lys49 and Lys66 each carry N6-acetyllysine. Position 102 is an N6-succinyllysine (Lys102). Lys107 carries the N6-acetyllysine; alternate modification. At Lys107 the chain carries N6-succinyllysine; alternate. Lys292 is subject to N6-(pyridoxal phosphate)lysine. The residue at position 362 (Lys362) is an N6-acetyllysine; alternate. Lys362 carries the post-translational modification N6-succinyllysine; alternate. Residues Lys386 and Lys392 each carry the N6-acetyllysine modification. Lys405 carries the N6-acetyllysine; alternate modification. At Lys405 the chain carries N6-succinyllysine; alternate. Lys421 carries the N6-acetyllysine modification.

Belongs to the class-III pyridoxal-phosphate-dependent aminotransferase family. Homohexamer. It depends on pyridoxal 5'-phosphate as a cofactor.

Its subcellular location is the mitochondrion matrix. It carries out the reaction L-ornithine + 2-oxoglutarate = L-glutamate 5-semialdehyde + L-glutamate. It participates in amino-acid biosynthesis; L-proline biosynthesis; L-glutamate 5-semialdehyde from L-ornithine: step 1/1. Its function is as follows. Catalyzes the reversible interconversion of L-ornithine and 2-oxoglutarate to L-glutamate semialdehyde and L-glutamate. The chain is Ornithine aminotransferase, mitochondrial (Oat) from Mus musculus (Mouse).